The primary structure comprises 374 residues: Tetraacyldisaccharide 4'-kinase (374 aa).

ATP is bound at residue 66 to 73 (TAGGTGKT).

This sequence belongs to the LpxK family.

The catalysed reaction is a lipid A disaccharide + ATP = a lipid IVA + ADP + H(+). It participates in glycolipid biosynthesis; lipid IV(A) biosynthesis; lipid IV(A) from (3R)-3-hydroxytetradecanoyl-[acyl-carrier-protein] and UDP-N-acetyl-alpha-D-glucosamine: step 6/6. Its function is as follows. Transfers the gamma-phosphate of ATP to the 4'-position of a tetraacyldisaccharide 1-phosphate intermediate (termed DS-1-P) to form tetraacyldisaccharide 1,4'-bis-phosphate (lipid IVA). This is Tetraacyldisaccharide 4'-kinase from Syntrophus aciditrophicus (strain SB).